The primary structure comprises 179 residues: uncharacterized protein (179 aa).

A compositionally biased stretch (basic and acidic residues) spans 1 to 14 (MTKKVKLDQDEINN). Disordered stretches follow at residues 1-90 (MTKK…NNFC) and 121-147 (HKKSTRSQSQSSLNSFDQDNKSKDKKV). Composition is skewed to low complexity over residues 15–90 (KNKN…NNFC) and 126–137 (RSQSQSSLNSFD). Positions 138-147 (QDNKSKDKKV) are enriched in basic and acidic residues.

This is an uncharacterized protein from Dictyostelium discoideum (Social amoeba).